Consider the following 177-residue polypeptide: ATP synthase subunit delta (177 aa).

The protein belongs to the ATPase delta chain family. In terms of assembly, F-type ATPases have 2 components, F(1) - the catalytic core - and F(0) - the membrane proton channel. F(1) has five subunits: alpha(3), beta(3), gamma(1), delta(1), epsilon(1). F(0) has three main subunits: a(1), b(2) and c(10-14). The alpha and beta chains form an alternating ring which encloses part of the gamma chain. F(1) is attached to F(0) by a central stalk formed by the gamma and epsilon chains, while a peripheral stalk is formed by the delta and b chains.

The protein resides in the cell inner membrane. F(1)F(0) ATP synthase produces ATP from ADP in the presence of a proton or sodium gradient. F-type ATPases consist of two structural domains, F(1) containing the extramembraneous catalytic core and F(0) containing the membrane proton channel, linked together by a central stalk and a peripheral stalk. During catalysis, ATP synthesis in the catalytic domain of F(1) is coupled via a rotary mechanism of the central stalk subunits to proton translocation. In terms of biological role, this protein is part of the stalk that links CF(0) to CF(1). It either transmits conformational changes from CF(0) to CF(1) or is implicated in proton conduction. The protein is ATP synthase subunit delta of Psychromonas ingrahamii (strain DSM 17664 / CCUG 51855 / 37).